Reading from the N-terminus, the 468-residue chain is ATP synthase subunit beta (468 aa).

148–155 serves as a coordination point for ATP; the sequence is GGAGVGKT.

The protein belongs to the ATPase alpha/beta chains family. In terms of assembly, F-type ATPases have 2 components, CF(1) - the catalytic core - and CF(0) - the membrane proton channel. CF(1) has five subunits: alpha(3), beta(3), gamma(1), delta(1), epsilon(1). CF(0) has three main subunits: a(1), b(2) and c(9-12). The alpha and beta chains form an alternating ring which encloses part of the gamma chain. CF(1) is attached to CF(0) by a central stalk formed by the gamma and epsilon chains, while a peripheral stalk is formed by the delta and b chains.

The protein localises to the cell inner membrane. It catalyses the reaction ATP + H2O + 4 H(+)(in) = ADP + phosphate + 5 H(+)(out). Functionally, produces ATP from ADP in the presence of a proton gradient across the membrane. The catalytic sites are hosted primarily by the beta subunits. The sequence is that of ATP synthase subunit beta from Xanthomonas euvesicatoria pv. vesicatoria (strain 85-10) (Xanthomonas campestris pv. vesicatoria).